The primary structure comprises 236 residues: Transcriptional activator protein SolR (236 aa).

An HTH luxR-type domain is found at 169 to 234 (VPESSAALTA…QAVVKAIAIG (66 aa)). Residues 193 to 212 (AYEIGQILRISERTVNFHVN) constitute a DNA-binding region (H-T-H motif).

Belongs to the autoinducer-regulated transcriptional regulatory protein family.

The protein is Transcriptional activator protein SolR (solR) of Ralstonia nicotianae (strain ATCC BAA-1114 / GMI1000) (Ralstonia solanacearum).